A 238-amino-acid chain; its full sequence is Major prion protein (238 aa).

An N-terminal signal peptide occupies residues 1–15 (MLVLFVATWSDLGLC). The segment at 16–215 (KKRPKPGGWN…ESQAYYQRGS (200 aa)) is interaction with GRB2, ERI3 and SYN1. The interval 18–93 (RPKPGGWNTG…WHKPSKPKTS (76 aa)) is disordered. 4 tandem repeats follow at residues 44–52 (PQGGGGWGQ), 53–60 (PHGGGWGQ), 61–68 (PHGGGWGQ), and 69–76 (PHGGGWGQ). The segment at 44 to 83 (PQGGGGWGQPHGGGWGQPHGGGWGQPHGGGWGQGGGTHNQ) is 4 X 8 AA tandem repeats of P-H-G-G-G-W-G-Q. Residues 45–80 (QGGGGWGQPHGGGWGQPHGGGWGQPHGGGWGQGGGT) are compositionally biased toward gly residues. Cu(2+)-binding residues include Gly47, Gly48, His54, Gly55, Gly56, His62, Gly63, Gly64, His70, Gly71, and Gly72. The span at 83 to 93 (QWHKPSKPKTS) shows a compositional bias: basic residues. Cys164 and Cys199 are oxidised to a cystine. 2 N-linked (GlcNAc...) asparagine glycosylation sites follow: Asn166 and Asn182. Ser215 carries GPI-anchor amidated serine lipidation. A propeptide spans 216 to 238 (SIVLFSSPPVILLISFLIFLIVG) (removed in mature form).

The protein belongs to the prion family. As to quaternary structure, monomer and homodimer. Has a tendency to aggregate into amyloid fibrils containing a cross-beta spine, formed by a steric zipper of superposed beta-strands. Soluble oligomers may represent an intermediate stage on the path to fibril formation. Copper binding may promote oligomerization. Interacts with GRB2, APP, ERI3/PRNPIP and SYN1. Mislocalized cytosolically exposed PrP interacts with MGRN1; this interaction alters MGRN1 subcellular location and causes lysosomal enlargement. Interacts with KIAA1191.

The protein resides in the cell membrane. The protein localises to the golgi apparatus. Functionally, its primary physiological function is unclear. Has cytoprotective activity against internal or environmental stresses. May play a role in neuronal development and synaptic plasticity. May be required for neuronal myelin sheath maintenance. May play a role in iron uptake and iron homeostasis. Soluble oligomers are toxic to cultured neuroblastoma cells and induce apoptosis (in vitro). Association with GPC1 (via its heparan sulfate chains) targets PRNP to lipid rafts. Also provides Cu(2+) or Zn(2+) for the ascorbate-mediated GPC1 deaminase degradation of its heparan sulfate side chains. The sequence is that of Major prion protein (PRNP) from Theropithecus gelada (Gelada baboon).